Consider the following 308-residue polypeptide: Cytochrome b (308 aa).

4 helical membrane-spanning segments follow: residues 1–21, 45–66, 81–101, and 146–166; these read FGLL…LLAA, WLIR…YLHI, WNIG…GYVL, and FFAL…VHLT. Heme b-binding residues include His-51 and His-65. Residues His-150 and His-164 each contribute to the heme b site. His-169 serves as a coordination point for a ubiquinone. The next 3 membrane-spanning stretches (helical) occupy residues 194–214, 256–276, and 288–308; these read TKDM…ALFS, LGGV…PLLH, and LSQI…WVGS.

It belongs to the cytochrome b family. The cytochrome bc1 complex contains 11 subunits: 3 respiratory subunits (MT-CYB, CYC1 and UQCRFS1), 2 core proteins (UQCRC1 and UQCRC2) and 6 low-molecular weight proteins (UQCRH/QCR6, UQCRB/QCR7, UQCRQ/QCR8, UQCR10/QCR9, UQCR11/QCR10 and a cleavage product of UQCRFS1). This cytochrome bc1 complex then forms a dimer. Requires heme b as cofactor.

Its subcellular location is the mitochondrion inner membrane. Component of the ubiquinol-cytochrome c reductase complex (complex III or cytochrome b-c1 complex) that is part of the mitochondrial respiratory chain. The b-c1 complex mediates electron transfer from ubiquinol to cytochrome c. Contributes to the generation of a proton gradient across the mitochondrial membrane that is then used for ATP synthesis. The protein is Cytochrome b (MT-CYB) of Pomatostomus temporalis (Grey-crowned babbler).